A 168-amino-acid polypeptide reads, in one-letter code: Mitochondrial ATP-independent inner membrane protease subunit 1a (168 aa).

Residues 1–47 (MRMTFLSYLKQWRGTAKEAFENVSIVAKFLCLLHVTDRYIISTTHVH) constitute a mitochondrion transit peptide. Residues serine 50 and lysine 94 contribute to the active site.

This sequence belongs to the peptidase S26 family. IMP1 subfamily. Heterodimer of 2 subunits, IMP1A/B and IMP12.

The protein localises to the mitochondrion inner membrane. Its function is as follows. Catalyzes the removal of transit peptides required for the targeting of proteins from the mitochondrial matrix, across the inner membrane, into the inter-membrane space. The protein is Mitochondrial ATP-independent inner membrane protease subunit 1a of Arabidopsis thaliana (Mouse-ear cress).